An 83-amino-acid chain; its full sequence is Toxin BmKBT (83 aa).

The signal sequence occupies residues 1-19 (MKAALLLVIFSLMLIGVLT). Residues 21–81 (KSGYPTDHEG…TWSRATNKCR (61 aa)) enclose the LCN-type CS-alpha/beta domain. Disulfide bonds link Cys-31/Cys-80, Cys-35/Cys-54, Cys-41/Cys-61, and Cys-45/Cys-63. Residue Lys-83 is a propeptide, removed by a carboxypeptidase.

It belongs to the long (4 C-C) scorpion toxin superfamily. Sodium channel inhibitor family. Beta subfamily. Expressed by the venom gland.

It localises to the secreted. Functionally, this toxin increases the peak sodium current, slows down the inactivation of sodium channels (Nav), and prolongs the action potential of dorsal root ganglion neurons, which indicates that it behaves as a classical alpha-toxin. It binds to mammal brain and insect sodium channels, but with a different manner. This peptide may bind to a distinct receptor site on mammal brain sodium channels, which is unconnected with that for BmKAS (a beta-toxin), BmKIT2 (a beta-toxin) or BmK I (an alpha toxin). In contrast, the receptor site for BmKabT on insect sodium channels might be closely related to that for the beta-insect depressant toxin BmKIT2. Possesses potent toxicity in mice but induces only paralysis in cotton bollworm. In Olivierus martensii (Manchurian scorpion), this protein is Toxin BmKBT.